The primary structure comprises 345 residues: NADPH dehydrogenase (345 aa).

23–26 contributes to the FMN binding site; that stretch reads SPMC. Position 28 (tyrosine 28) interacts with substrate. FMN-binding residues include alanine 60 and glutamine 102. Residue 164-167 coordinates substrate; it reads HGAH. Residues arginine 215 and 307-308 contribute to the FMN site; that span reads GR.

This sequence belongs to the NADH:flavin oxidoreductase/NADH oxidase family. NamA subfamily. In terms of assembly, homotetramer. FMN serves as cofactor.

It catalyses the reaction A + NADPH + H(+) = AH2 + NADP(+). Functionally, catalyzes the reduction of the double bond of an array of alpha,beta-unsaturated aldehydes and ketones. It also reduces the nitro group of nitroester and nitroaromatic compounds. It could have a role in detoxification processes. The protein is NADPH dehydrogenase of Bacillus cereus (strain ZK / E33L).